Consider the following 476-residue polypeptide: MKRVLVLLLALAFGHALERGRDYEKDKVCNELAMLGKEDFRSLSLILYSRKFSSSTFEQVNQLVKEVVSLTEECCAEGADPTCYDTRTSELSVKSCESDAPFPVHPGTPECCTKEGLERKLCMAALSHQPQEFPTYVEPTNDEICEAFRRDPKGFADQFLYEYSSNYGQAPLPLLVAYTKNYLSMVGSCCTSANPTVCFVKERLQMKHLSLLTTMSNRVCSQYAAYGKEKSRLSHLIKLAQKVPTANLENVLPLAEDFTEILSRCCESTSEDCMASELPEHTIKICQNLSKKNSKFEECCQENTPMNIFMCTYFMPAAEPLQLPAIKLPTGKDLCGQSTTQAMDQYTFELSRRTQVPEVFLSKVLEPTLKTLRECCDTQDSVACFSTQSPLLKRQLTSFIEKGQEMCADYSENTFTEYKKKLAERLRTKTPNTSPAELKDMVEKHSDFASKCCSINSPPLYCSSQIDAEMIDTLQS.

The N-terminal stretch at 1-16 (MKRVLVLLLALAFGHA) is a signal peptide. Albumin domains follow at residues 17-208 (LERG…QMKH), 209-394 (LSLL…LLKR), and 395-476 (QLTS…TLQS). 14 disulfide bridges follow: Cys29–Cys75, Cys74–Cys83, Cys96–Cys112, Cys111–Cys122, Cys145–Cys190, Cys189–Cys198, Cys220–Cys266, Cys265–Cys273, Cys286–Cys300, Cys299–Cys311, Cys335–Cys376, Cys375–Cys384, Cys407–Cys453, and Cys452–Cys462. Asn288 is a glycosylation site (N-linked (GlcNAc...) asparagine). Ser434 is subject to Phosphoserine.

The protein belongs to the ALB/AFP/VDB family. As to quaternary structure, associates with membrane-bound immunoglobulin on the surface of B-lymphocytes and with IgG Fc receptor on the membranes of T-lymphocytes. Interacts with LRP2; the interaction is required for renal uptake of GC in complex with 25-hydroxyvitamin D3.

Its subcellular location is the secreted. Its function is as follows. Involved in vitamin D transport and storage, scavenging of extracellular G-actin, enhancement of the chemotactic activity of C5 alpha for neutrophils in inflammation and macrophage activation. This is Vitamin D-binding protein (Gc) from Mus musculus (Mouse).